A 184-amino-acid polypeptide reads, in one-letter code: Ribosome maturation factor RimM (184 aa).

Residues 104-184 (SEDEFYWREL…RIEVDWDPGF (81 aa)) enclose the PRC barrel domain.

Belongs to the RimM family. In terms of assembly, binds ribosomal protein uS19.

The protein resides in the cytoplasm. Functionally, an accessory protein needed during the final step in the assembly of 30S ribosomal subunit, possibly for assembly of the head region. Essential for efficient processing of 16S rRNA. May be needed both before and after RbfA during the maturation of 16S rRNA. It has affinity for free ribosomal 30S subunits but not for 70S ribosomes. The polypeptide is Ribosome maturation factor RimM (Vibrio atlanticus (strain LGP32) (Vibrio splendidus (strain Mel32))).